The primary structure comprises 97 residues: Type 1 phosphatases regulator YPI2 (97 aa).

The interval 1–97 (MNKKKTKICC…KMMEKKSNNT (97 aa)) is disordered. The segment covering 43-53 (ENDKDLGFDER) has biased composition (basic and acidic residues). Positions 54 to 65 (RKRRVERRRRKL) are enriched in basic residues.

Belongs to the YPI1 family.

Its subcellular location is the nucleus. Functionally, regulator of type 1 phosphatases which maintains protein phosphatase activity under strict control. The protein is Type 1 phosphatases regulator YPI2 (YPI2) of Vanderwaltozyma polyspora (strain ATCC 22028 / DSM 70294 / BCRC 21397 / CBS 2163 / NBRC 10782 / NRRL Y-8283 / UCD 57-17) (Kluyveromyces polysporus).